A 530-amino-acid polypeptide reads, in one-letter code: Testis-expressed protein 44 (530 aa).

Residues 1–10 (MTAEPLEDPE) are compositionally biased toward acidic residues. Disordered regions lie at residues 1–85 (MTAE…FIRT), 207–233 (ATSA…TSLL), 256–290 (ENNR…QPVL), and 305–384 (QTSV…SPDF). Composition is skewed to polar residues over residues 11-26 (ASSS…SSDN), 222-233 (GQDNPEETTSLL), and 257-280 (NNRT…TLGN). The segment covering 365 to 381 (PPDPPDPGSPGGSPPHS) has biased composition (pro residues). S468 is modified (phosphoserine).

It localises to the cytoplasm. In Mus musculus (Mouse), this protein is Testis-expressed protein 44 (Tex44).